The chain runs to 32 residues: Mu-theraphotoxin-Se1a (32 aa).

Intrachain disulfides connect C2/C17, C9/C22, and C16/C28.

It belongs to the neurotoxin 10 (Hwtx-1) family. In terms of tissue distribution, expressed by the venom gland.

It is found in the secreted. Its function is as follows. Voltage-gated sodium channel Nav1.7/SCN9A inhibitor. The polypeptide is Mu-theraphotoxin-Se1a (Selenocosmia effera (Tarantula spider)).